We begin with the raw amino-acid sequence, 1136 residues long: Phytochrome (1136 aa).

A disordered region spans residues 1–28; it reads MSTTRPRAATHSASSGSVSRSSKHSARV. The segment covering 11 to 20 has biased composition (low complexity); sequence HSASSGSVSR. A GAF domain is found at 231–414; the sequence is DIRLLCDTVV…VFGIQLNKEV (184 aa). Cys336 serves as a coordination point for phytochromobilin. PAS domains lie at 629 to 699 and 762 to 833; these read VTNE…LQGE and DYRA…TKLR. The Histidine kinase domain occupies 913–1132; that stretch reads YIRQEIRNPL…IINVEFPLAQ (220 aa).

Belongs to the phytochrome family. As to quaternary structure, homodimer. Post-translationally, contains one covalently linked phytochromobilin chromophore.

Functionally, regulatory photoreceptor which exists in two forms that are reversibly interconvertible by light: the Pr form that absorbs maximally in the red region of the spectrum and the Pfr form that absorbs maximally in the far-red region. Photoconversion of Pr to Pfr induces an array of morphogenic responses, whereas reconversion of Pfr to Pr cancels the induction of those responses. Pfr controls the expression of a number of nuclear genes including those encoding the small subunit of ribulose-bisphosphate carboxylase, chlorophyll A/B binding protein, protochlorophyllide reductase, rRNA, etc. It also controls the expression of its own gene(s) in a negative feedback fashion. The chain is Phytochrome from Picea abies (Norway spruce).